Here is a 142-residue protein sequence, read N- to C-terminus: Large ribosomal subunit protein uL13 (142 aa).

Belongs to the universal ribosomal protein uL13 family. As to quaternary structure, part of the 50S ribosomal subunit.

Its function is as follows. This protein is one of the early assembly proteins of the 50S ribosomal subunit, although it is not seen to bind rRNA by itself. It is important during the early stages of 50S assembly. The polypeptide is Large ribosomal subunit protein uL13 (Ralstonia nicotianae (strain ATCC BAA-1114 / GMI1000) (Ralstonia solanacearum)).